A 357-amino-acid chain; its full sequence is Sulfate/thiosulfate import ATP-binding protein CysA (357 aa).

An ABC transporter domain is found at 3-237 (IVIQNVSKSF…PKSPFVYDFL (235 aa)). 35–42 (GPSGSGKT) provides a ligand contact to ATP.

The protein belongs to the ABC transporter superfamily. Sulfate/tungstate importer (TC 3.A.1.6) family. The complex is composed of two ATP-binding proteins (CysA), two transmembrane proteins (CysT and CysW) and a solute-binding protein (CysP).

It is found in the cell membrane. It carries out the reaction sulfate(out) + ATP + H2O = sulfate(in) + ADP + phosphate + H(+). The catalysed reaction is thiosulfate(out) + ATP + H2O = thiosulfate(in) + ADP + phosphate + H(+). Functionally, part of the ABC transporter complex CysAWTP involved in sulfate/thiosulfate import. Responsible for energy coupling to the transport system. The sequence is that of Sulfate/thiosulfate import ATP-binding protein CysA from Halalkalibacterium halodurans (strain ATCC BAA-125 / DSM 18197 / FERM 7344 / JCM 9153 / C-125) (Bacillus halodurans).